We begin with the raw amino-acid sequence, 120 residues long: Large ribosomal subunit protein eL8 (120 aa).

The protein belongs to the eukaryotic ribosomal protein eL8 family. As to quaternary structure, part of the 50S ribosomal subunit. Probably part of the RNase P complex.

It is found in the cytoplasm. In terms of biological role, multifunctional RNA-binding protein that recognizes the K-turn motif in ribosomal RNA, the RNA component of RNase P, box H/ACA, box C/D and box C'/D' sRNAs. In Haloquadratum walsbyi (strain DSM 16790 / HBSQ001), this protein is Large ribosomal subunit protein eL8.